The following is a 132-amino-acid chain: ATP synthase epsilon chain (132 aa).

It belongs to the ATPase epsilon chain family. F-type ATPases have 2 components, CF(1) - the catalytic core - and CF(0) - the membrane proton channel. CF(1) has five subunits: alpha(3), beta(3), gamma(1), delta(1), epsilon(1). CF(0) has three main subunits: a, b and c.

The protein resides in the cell membrane. Functionally, produces ATP from ADP in the presence of a proton gradient across the membrane. The protein is ATP synthase epsilon chain of Desulfitobacterium hafniense (strain Y51).